Consider the following 557-residue polypeptide: Formate--tetrahydrofolate ligase (557 aa).

An ATP-binding site is contributed by 67 to 74 (TPAGEGKS).

This sequence belongs to the formate--tetrahydrofolate ligase family.

It carries out the reaction (6S)-5,6,7,8-tetrahydrofolate + formate + ATP = (6R)-10-formyltetrahydrofolate + ADP + phosphate. It functions in the pathway one-carbon metabolism; tetrahydrofolate interconversion. This is Formate--tetrahydrofolate ligase from Lacticaseibacillus paracasei (strain ATCC 334 / BCRC 17002 / CCUG 31169 / CIP 107868 / KCTC 3260 / NRRL B-441) (Lactobacillus paracasei).